We begin with the raw amino-acid sequence, 272 residues long: Undecaprenyl-diphosphatase (272 aa).

Helical transmembrane passes span 2–22 (FDII…FLPI), 43–63 (FISM…VLLY), 82–102 (WQLW…GLPL), 110–130 (LHTP…FIIL), 185–205 (YVAT…VLII), 224–244 (VLMT…KWLL), and 252–272 (FKPF…VMFI).

The protein belongs to the UppP family.

The protein resides in the cell membrane. The enzyme catalyses di-trans,octa-cis-undecaprenyl diphosphate + H2O = di-trans,octa-cis-undecaprenyl phosphate + phosphate + H(+). Its function is as follows. Catalyzes the dephosphorylation of undecaprenyl diphosphate (UPP). Confers resistance to bacitracin. The polypeptide is Undecaprenyl-diphosphatase (Lacticaseibacillus casei (strain BL23) (Lactobacillus casei)).